The following is a 466-amino-acid chain: Tryptophan synthase beta chain 2, chloroplastic (466 aa).

Residue Lys161 is modified to N6-(pyridoxal phosphate)lysine.

The protein belongs to the TrpB family. In terms of assembly, tetramer of two alpha and two beta chains. Pyridoxal 5'-phosphate serves as cofactor.

It is found in the plastid. Its subcellular location is the chloroplast. It catalyses the reaction (1S,2R)-1-C-(indol-3-yl)glycerol 3-phosphate + L-serine = D-glyceraldehyde 3-phosphate + L-tryptophan + H2O. Its pathway is amino-acid biosynthesis; L-tryptophan biosynthesis; L-tryptophan from chorismate: step 5/5. The beta subunit is responsible for the synthesis of L-tryptophan from indole and L-serine. This is Tryptophan synthase beta chain 2, chloroplastic (TSB) from Camptotheca acuminata (Happy tree).